Consider the following 298-residue polypeptide: Protoheme IX farnesyltransferase (298 aa).

Transmembrane regions (helical) follow at residues L23–Y43, L47–F67, V93–N113, H115–L135, I143–G163, A169–T189, I211–L231, V236–A256, and M278–S298.

It belongs to the UbiA prenyltransferase family. Protoheme IX farnesyltransferase subfamily.

The protein localises to the cell membrane. It carries out the reaction heme b + (2E,6E)-farnesyl diphosphate + H2O = Fe(II)-heme o + diphosphate. The protein operates within porphyrin-containing compound metabolism; heme O biosynthesis; heme O from protoheme: step 1/1. Its function is as follows. Converts heme B (protoheme IX) to heme O by substitution of the vinyl group on carbon 2 of heme B porphyrin ring with a hydroxyethyl farnesyl side group. The sequence is that of Protoheme IX farnesyltransferase from Hyperthermus butylicus (strain DSM 5456 / JCM 9403 / PLM1-5).